The chain runs to 673 residues: Ion-translocating oxidoreductase complex subunit C (673 aa).

2 consecutive 4Fe-4S ferredoxin-type domains span residues 368–397 (MGAP…QQLY) and 407–436 (KATA…VQYF). 8 residues coordinate [4Fe-4S] cluster: C377, C380, C383, C387, C416, C419, C422, and C426. The segment at 529-554 (EARKAQARAKQAGHPMADSATSGDDP) is disordered.

It belongs to the 4Fe4S bacterial-type ferredoxin family. RnfC subfamily. As to quaternary structure, the complex is composed of six subunits: RsxA, RsxB, RsxC, RsxD, RsxE and RsxG. Requires [4Fe-4S] cluster as cofactor.

Its subcellular location is the cell inner membrane. Its function is as follows. Part of a membrane-bound complex that couples electron transfer with translocation of ions across the membrane. Required to maintain the reduced state of SoxR. This chain is Ion-translocating oxidoreductase complex subunit C, found in Salmonella arizonae (strain ATCC BAA-731 / CDC346-86 / RSK2980).